A 297-amino-acid chain; its full sequence is Phosphoribosylaminoimidazole-succinocarboxamide synthase (297 aa).

This sequence belongs to the SAICAR synthetase family.

It catalyses the reaction 5-amino-1-(5-phospho-D-ribosyl)imidazole-4-carboxylate + L-aspartate + ATP = (2S)-2-[5-amino-1-(5-phospho-beta-D-ribosyl)imidazole-4-carboxamido]succinate + ADP + phosphate + 2 H(+). It participates in purine metabolism; IMP biosynthesis via de novo pathway; 5-amino-1-(5-phospho-D-ribosyl)imidazole-4-carboxamide from 5-amino-1-(5-phospho-D-ribosyl)imidazole-4-carboxylate: step 1/2. The sequence is that of Phosphoribosylaminoimidazole-succinocarboxamide synthase from Mycobacterium sp. (strain JLS).